The following is a 232-amino-acid chain: Ribonuclease P protein component 3 (232 aa).

This sequence belongs to the eukaryotic/archaeal RNase P protein component 3 family. In terms of assembly, consists of a catalytic RNA component and at least 5 protein subunits.

Its subcellular location is the cytoplasm. It catalyses the reaction Endonucleolytic cleavage of RNA, removing 5'-extranucleotides from tRNA precursor.. Its function is as follows. Part of ribonuclease P, a protein complex that generates mature tRNA molecules by cleaving their 5'-ends. The protein is Ribonuclease P protein component 3 of Methanococcus maripaludis (strain DSM 14266 / JCM 13030 / NBRC 101832 / S2 / LL).